The primary structure comprises 406 residues: 2,3-bisphosphoglycerate-independent phosphoglycerate mutase (406 aa).

Belongs to the BPG-independent phosphoglycerate mutase family. A-PGAM subfamily.

The catalysed reaction is (2R)-2-phosphoglycerate = (2R)-3-phosphoglycerate. Its pathway is carbohydrate degradation; glycolysis; pyruvate from D-glyceraldehyde 3-phosphate: step 3/5. Its function is as follows. Catalyzes the interconversion of 2-phosphoglycerate and 3-phosphoglycerate. The polypeptide is 2,3-bisphosphoglycerate-independent phosphoglycerate mutase (Methanococcus vannielii (strain ATCC 35089 / DSM 1224 / JCM 13029 / OCM 148 / SB)).